The sequence spans 99 residues: Protein IDA-LIKE 3 (99 aa).

Positions Met1–Gly32 are cleaved as a signal peptide. Polar residues predominate over residues Thr36–Pro45. Disordered regions lie at residues Thr36–Val58 and Ser73–Thr99. Basic and acidic residues predominate over residues Lys46–Val58.

In terms of tissue distribution, expressed in flowers and seedlings. Detected at the base of pedicel, in the floral abscission zone and in vascular tissues.

The protein resides in the secreted. It localises to the extracellular space. In terms of biological role, may be involved in floral abscission. The protein is Protein IDA-LIKE 3 (IDL3) of Arabidopsis thaliana (Mouse-ear cress).